A 420-amino-acid chain; its full sequence is Protein phosphatase methylesterase 1 (420 aa).

2 stretches are compositionally biased toward low complexity: residues Pro18–Ser28 and Ser42–Ile51. A disordered region spans residues Pro18–Ile51. Catalysis depends on residues Ser197, Asp223, and His354.

This sequence belongs to the AB hydrolase superfamily.

It catalyses the reaction [phosphatase 2A protein]-C-terminal L-leucine methyl ester + H2O = [phosphatase 2A protein]-C-terminal L-leucine + methanol + H(+). Its function is as follows. Demethylates proteins that have been reversibly carboxymethylated. Demethylates the phosphatase PP2A catalytic subunit. The polypeptide is Protein phosphatase methylesterase 1 (ppe1) (Aspergillus fumigatus (strain ATCC MYA-4609 / CBS 101355 / FGSC A1100 / Af293) (Neosartorya fumigata)).